Consider the following 338-residue polypeptide: Probable 1-aminocyclopropane-1-carboxylate deaminase (338 aa).

Position 51 is an N6-(pyridoxal phosphate)lysine (Lys51). Residue Ser78 is the Nucleophile of the active site.

Belongs to the ACC deaminase/D-cysteine desulfhydrase family. The cofactor is pyridoxal 5'-phosphate.

It catalyses the reaction 1-aminocyclopropane-1-carboxylate + H2O = 2-oxobutanoate + NH4(+). Functionally, catalyzes a cyclopropane ring-opening reaction, the irreversible conversion of 1-aminocyclopropane-1-carboxylate (ACC) to ammonia and alpha-ketobutyrate. This is Probable 1-aminocyclopropane-1-carboxylate deaminase from Schizosaccharomyces pombe (strain 972 / ATCC 24843) (Fission yeast).